Here is a 242-residue protein sequence, read N- to C-terminus: Ribonuclease PH (242 aa).

Residues arginine 89 and 127-129 (GTR) each bind phosphate.

Belongs to the RNase PH family. As to quaternary structure, homohexameric ring arranged as a trimer of dimers.

It catalyses the reaction tRNA(n+1) + phosphate = tRNA(n) + a ribonucleoside 5'-diphosphate. Its function is as follows. Phosphorolytic 3'-5' exoribonuclease that plays an important role in tRNA 3'-end maturation. Removes nucleotide residues following the 3'-CCA terminus of tRNAs; can also add nucleotides to the ends of RNA molecules by using nucleoside diphosphates as substrates, but this may not be physiologically important. Probably plays a role in initiation of 16S rRNA degradation (leading to ribosome degradation) during starvation. This Neisseria meningitidis serogroup B (strain ATCC BAA-335 / MC58) protein is Ribonuclease PH.